Consider the following 250-residue polypeptide: 2,3-bisphosphoglycerate-dependent phosphoglycerate mutase (250 aa).

Residues 10 to 17 (RHGESQWN), 23 to 24 (TG), arginine 62, 89 to 92 (ERHY), lysine 100, 116 to 117 (RR), and 185 to 186 (GN) contribute to the substrate site. Histidine 11 acts as the Tele-phosphohistidine intermediate in catalysis. The Proton donor/acceptor role is filled by glutamate 89.

The protein belongs to the phosphoglycerate mutase family. BPG-dependent PGAM subfamily. As to quaternary structure, homodimer.

It catalyses the reaction (2R)-2-phosphoglycerate = (2R)-3-phosphoglycerate. It functions in the pathway carbohydrate degradation; glycolysis; pyruvate from D-glyceraldehyde 3-phosphate: step 3/5. Functionally, catalyzes the interconversion of 2-phosphoglycerate and 3-phosphoglycerate. The sequence is that of 2,3-bisphosphoglycerate-dependent phosphoglycerate mutase from Salmonella agona (strain SL483).